Here is an 84-residue protein sequence, read N- to C-terminus: Gomesin-like peptide (84 aa).

Positions 1–23 (MNRTRALVCLFLAVLILAHESEA) are cleaved as a signal peptide. Pyrrolidone carboxylic acid is present on Q24. 2 disulfides stabilise this stretch: C25/C38 and C29/C34. Residue R41 is modified to Arginine amide. Residues 42 to 84 (GKRSVEEPSGGAQVVEKRAVDDADIPSAVEERELDEEESIEFR) constitute a propeptide that is removed on maturation.

Expressed by the venom gland.

It localises to the secreted. In terms of biological role, antibacterial peptide. This Hadronyche infensa (Fraser island funnel-web spider) protein is Gomesin-like peptide.